The following is a 349-amino-acid chain: tRNA pseudouridine synthase D (349 aa).

Phenylalanine 27 is a binding site for substrate. Aspartate 80 serves as the catalytic Nucleophile. Substrate is bound at residue asparagine 129. The 149-residue stretch at 155-303 (GVPNYFGAQR…VEAARRAMLL (149 aa)) folds into the TRUD domain. Phenylalanine 329 provides a ligand contact to substrate.

It belongs to the pseudouridine synthase TruD family.

The catalysed reaction is uridine(13) in tRNA = pseudouridine(13) in tRNA. Its function is as follows. Responsible for synthesis of pseudouridine from uracil-13 in transfer RNAs. This Escherichia coli (strain 55989 / EAEC) protein is tRNA pseudouridine synthase D.